We begin with the raw amino-acid sequence, 62 residues long: Photosystem II reaction center protein Z (62 aa).

The next 2 helical transmembrane spans lie at 8–28 and 41–61; these read AVFALIITSSILLISVPVVFA and FSGTSLWIGLVFLVGILNSLI.

This sequence belongs to the PsbZ family. In terms of assembly, PSII is composed of 1 copy each of membrane proteins PsbA, PsbB, PsbC, PsbD, PsbE, PsbF, PsbH, PsbI, PsbJ, PsbK, PsbL, PsbM, PsbT, PsbY, PsbZ, Psb30/Ycf12, at least 3 peripheral proteins of the oxygen-evolving complex and a large number of cofactors. It forms dimeric complexes.

It localises to the plastid. Its subcellular location is the chloroplast thylakoid membrane. May control the interaction of photosystem II (PSII) cores with the light-harvesting antenna, regulates electron flow through the 2 photosystem reaction centers. PSII is a light-driven water plastoquinone oxidoreductase, using light energy to abstract electrons from H(2)O, generating a proton gradient subsequently used for ATP formation. In Arabidopsis thaliana (Mouse-ear cress), this protein is Photosystem II reaction center protein Z.